The primary structure comprises 517 residues: MAISDVPAAAGTTATTTSDSDLRQPSLRRRSSAGVLFDAARDSGSDNSLTGKITDDDNIKDHKPNNHAASDDNVGAAANDAGQEHRQPVADFKYAYRPSVPAHRRIKESPLSSDNIFRQSHAGLFNLCIVVLVAVNSRLIIENLMKYGWLIKYGFWFSSKSLRDWPLFMCCLSLAIFPLAAFVVERLAQQKCISEPVVVLLHLIISTVELCYPVLVILRCDSAFVSGVTLMLLTCIVWLKLVSYAHTNYDMRALTVSNEKGETLPNTLIMEYPYTVTFRSLAYFMVAPTLCYQTSYPRTPSVRKGWVFRQLVKLIIFTGVMGFIIEQYMNPIVQNSTHPLKGNLLYAIERILKLSVPNVYVWLCMFYCFFHLWLNILAELVRFGDREFYKDWWNAKTVEEYWRMWNMPVHKWMVRHIYFPCLRRGIPKGAASLIAFLVSAVFHELCIAVPCHMFKLWAFIGIMFQVPLVLITNYLQNKYRNSMVGNMIFWFIFCILGQPMSVLLYYHDLMNRKGEVD.

The disordered stretch occupies residues 1–82 (MAISDVPAAA…NVGAAANDAG (82 aa)). Residues 8 to 17 (AAAGTTATTT) are compositionally biased toward low complexity. The span at 53-64 (ITDDDNIKDHKP) shows a compositional bias: basic and acidic residues. The span at 71-81 (DDNVGAAANDA) shows a compositional bias: low complexity. 7 helical membrane-spanning segments follow: residues 121–141 (HAGL…RLII), 165–185 (WPLF…FVVE), 197–217 (VVVL…VLVI), 222–242 (SAFV…LKLV), 272–292 (YPYT…TLCY), 305–325 (GWVF…GFII), and 361–381 (VWLC…AELV). Residues 388–394 (FYKDWWN) carry the FYXDWWN motif motif. 3 helical membrane-spanning segments follow: residues 429 to 449 (GAAS…CIAV), 451 to 471 (CHMF…LVLI), and 484 to 504 (VGNM…SVLL). His-443 is a catalytic residue.

Belongs to the membrane-bound acyltransferase family. Sterol o-acyltransferase subfamily.

The protein resides in the endoplasmic reticulum membrane. The catalysed reaction is an acyl-CoA + a 1,2-diacyl-sn-glycerol = a triacyl-sn-glycerol + CoA. Its pathway is glycerolipid metabolism; triacylglycerol biosynthesis. In terms of biological role, involved in triacylglycerol (TAG) synthesis. Catalyzes the acylation of the sn-3 hydroxy group of sn-1,2-diacylglycerol using acyl-CoA. The sequence is that of Diacylglycerol O-acyltransferase 1C from Glycine max (Soybean).